Consider the following 202-residue polypeptide: MAELENPSVMSKLIAFLSSLLERVAESNDLTRRVATQSQRVSVFHGLSRPTITIQSYLERIFKYANCSPSCFVVAYVYLDRFTHRQPSLPINSFNVHRLLITSVMVAAKFLDDLYYNNAYYAKVGGISTKEMNFLELDFLFGLGFELNVTPNTFNAYFSYLQKEMTLLQPLSLVVVPSSRSLITFNDDEASHQKQQQQQLAV.

Belongs to the cyclin family. Cyclin U/P subfamily. As to quaternary structure, interacts with CDKA-1. As to expression, expressed in roots, stems and flowers. Expressed in the shoot apex, leaf primordia and young leaves.

This chain is Cyclin-U4-1 (CYCU4-1), found in Arabidopsis thaliana (Mouse-ear cress).